A 738-amino-acid polypeptide reads, in one-letter code: Glycogen [starch] synthase, muscle (738 aa).

Phosphoserine; by AMPK and PKA is present on serine 8. Phosphoserine is present on serine 11. A UDP-binding site is contributed by lysine 39. Residues histidine 205 and arginine 211 each coordinate UDP-alpha-D-glucose. Alpha-D-glucose 6-phosphate contacts are provided by histidine 291, glutamate 292, glutamine 294, histidine 297, and lysine 301. Arginine 331 contributes to the UDP binding site. Arginine 331 lines the UDP-alpha-D-glucose pocket. Serine 412 bears the Phosphoserine mark. Histidine 501 serves as a coordination point for alpha-D-glucose 6-phosphate. UDP-alpha-D-glucose-binding residues include glutamate 510, tryptophan 512, and glycine 513. Residue threonine 515 coordinates UDP. Positions 582 and 586 each coordinate alpha-D-glucose 6-phosphate. Residues 632-738 (QGYRYPRPAS…PTSSLGEERN (107 aa)) form a disordered region. 2 positions are modified to phosphoserine: serine 641 and serine 645. At serine 649 the chain carries Phosphoserine; by GSK3-alpha and GSK3-beta. Phosphoserine occurs at positions 652, 653, 657, and 672. A compositionally biased stretch (basic and acidic residues) spans 682–695 (AKDRRNIRAPEWPR). Phosphoserine occurs at positions 698, 709, and 711. Residues 698–738 (SCSSSTGGSKRSNSVDTGPSSSLSTPTEPLSPTSSLGEERN) are compositionally biased toward low complexity. Threonine 722 bears the Phosphothreonine mark. A phosphoserine mark is found at serine 728 and serine 732.

The protein belongs to the glycosyltransferase 3 family. Part of the GYS1-GYG1 complex, a heterooctamer composed of a tetramer of GYS1 and 2 dimers of GYG1, where each GYS1 protomer binds to one GYG1 subunit (via GYG1 C-terminus); the GYS1 tetramer may dissociate from GYG1 dimers to continue glycogen polymerization on its own. In terms of processing, phosphorylation at Ser-8 by AMPK inactivates the enzyme activity. Primed phosphorylation at Ser-657 (site 5) by CSNK2A1 and CSNK2A2 is required for inhibitory phosphorylation at Ser-641 (site 3a), Ser-645 (site 3b), Ser-649 (site 3c) and Ser-653 (site 4) by GSK3A an GSK3B. Phosphorylated at Ser-641 by PASK, leading to inactivation; phosphorylation by PASK is inhibited by glycogen. Phosphorylated at Ser-641 by DYRK2, leading to inactivation. Dephosphorylation at Ser-641 and Ser-645 by PP1 activates the enzyme.

It catalyses the reaction [(1-&gt;4)-alpha-D-glucosyl](n) + UDP-alpha-D-glucose = [(1-&gt;4)-alpha-D-glucosyl](n+1) + UDP + H(+). It functions in the pathway glycan biosynthesis; glycogen biosynthesis. Allosteric activation by glucose-6-phosphate. Phosphorylation reduces the activity towards UDP-glucose. When in the non-phosphorylated state, glycogen synthase does not require glucose-6-phosphate as an allosteric activator; when phosphorylated it does. In terms of biological role, glycogen synthase participates in the glycogen biosynthetic process along with glycogenin and glycogen branching enzyme. Extends the primer composed of a few glucose units formed by glycogenin by adding new glucose units to it. In this context, glycogen synthase transfers the glycosyl residue from UDP-Glc to the non-reducing end of alpha-1,4-glucan. This Rattus norvegicus (Rat) protein is Glycogen [starch] synthase, muscle (Gys1).